The chain runs to 1427 residues: Lysophospholipase NTE1 (1427 aa).

Residues 1–60 (MDSLHVSSTSVLVDVVEAVETATSLVVDTAEAVATEQATPTAVISNALARSAYAAHTSLS) lie on the Cytoplasmic side of the membrane. A helical membrane pass occupies residues 61–81 (YLAWAFGLWFLRLIGWVCYGI). The Lumenal portion of the chain corresponds to 82–96 (PTYVLGLLGRTINIS). Residues 97-117 (LQFSSLLLILIALVTVVVAVV) traverse the membrane as a helical segment. Residues 118–1427 (RYKYLTVYSR…KRTIARRNSI (1310 aa)) are Cytoplasmic-facing. Residues 281–296 (PMTSASDVPNMSLSSD) are compositionally biased toward polar residues. Residues 281–315 (PMTSASDVPNMSLSSDGSDDLQKGEPQFGEPRLSE) form a disordered region. Residues 615–735 (LMAA…LTKV) and 731–870 (SLTK…VASR) contribute to the a nucleoside 3',5'-cyclic phosphate site. Residues 787–807 (GIVGGESGDAKDGKSHRKNLT) are disordered. Residues 1124-1288 (LVLGGGGARG…VDNLPVSEMK (165 aa)) enclose the PNPLA domain. The GXGXXG motif lies at 1128–1133 (GGGARG). The GXSXG signature appears at 1155 to 1159 (GTSIG). Ser1157 functions as the Nucleophile in the catalytic mechanism. The active-site Proton acceptor is the Asp1275. Residues 1275–1277 (DGG) carry the DGA/G motif.

This sequence belongs to the NTE family.

It is found in the endoplasmic reticulum membrane. The catalysed reaction is a 1-acyl-sn-glycero-3-phosphocholine + H2O = sn-glycerol 3-phosphocholine + a fatty acid + H(+). Inhibited by organophosphorus esters. Its function is as follows. Intracellular phospholipase B that catalyzes the double deacylation of phosphatidylcholine (PC) to glycerophosphocholine (GroPCho). Plays an important role in membrane lipid homeostasis. Responsible for the rapid PC turnover in response to inositol, elevated temperatures, or when choline is present in the growth medium. This chain is Lysophospholipase NTE1 (NTE1), found in Yarrowia lipolytica (strain CLIB 122 / E 150) (Yeast).